Here is a 607-residue protein sequence, read N- to C-terminus: Elongation factor 4 (607 aa).

The 183-residue stretch at Glu11–Gln193 folds into the tr-type G domain. GTP-binding positions include Asp23–Thr28 and Asn140–Asp143.

It belongs to the TRAFAC class translation factor GTPase superfamily. Classic translation factor GTPase family. LepA subfamily.

It is found in the cell membrane. It catalyses the reaction GTP + H2O = GDP + phosphate + H(+). Functionally, required for accurate and efficient protein synthesis under certain stress conditions. May act as a fidelity factor of the translation reaction, by catalyzing a one-codon backward translocation of tRNAs on improperly translocated ribosomes. Back-translocation proceeds from a post-translocation (POST) complex to a pre-translocation (PRE) complex, thus giving elongation factor G a second chance to translocate the tRNAs correctly. Binds to ribosomes in a GTP-dependent manner. This chain is Elongation factor 4, found in Lactococcus lactis subsp. cremoris (strain MG1363).